A 319-amino-acid chain; its full sequence is Aspartate carbamoyltransferase catalytic subunit (319 aa).

Positions 54 and 55 each coordinate carbamoyl phosphate. Lysine 82 is an L-aspartate binding site. Carbamoyl phosphate-binding residues include arginine 104, histidine 134, and glutamine 137. 2 residues coordinate L-aspartate: arginine 171 and arginine 227. Glycine 271 and proline 272 together coordinate carbamoyl phosphate.

It belongs to the aspartate/ornithine carbamoyltransferase superfamily. ATCase family. Heterododecamer (2C3:3R2) of six catalytic PyrB chains organized as two trimers (C3), and six regulatory PyrI chains organized as three dimers (R2).

It catalyses the reaction carbamoyl phosphate + L-aspartate = N-carbamoyl-L-aspartate + phosphate + H(+). It functions in the pathway pyrimidine metabolism; UMP biosynthesis via de novo pathway; (S)-dihydroorotate from bicarbonate: step 2/3. Its function is as follows. Catalyzes the condensation of carbamoyl phosphate and aspartate to form carbamoyl aspartate and inorganic phosphate, the committed step in the de novo pyrimidine nucleotide biosynthesis pathway. This is Aspartate carbamoyltransferase catalytic subunit from Kineococcus radiotolerans (strain ATCC BAA-149 / DSM 14245 / SRS30216).